The sequence spans 627 residues: Capsid vertex component 2 (627 aa).

An interaction with major capsid protein/MCP region spans residues 1-56 (MFGRGLPPLKFGQIGGDGWSTVLADPGNRLIVANAHRSEPRLRVETLIREELLTSR). A disordered region spans residues 458 to 480 (LSGDGDPIRAPGSRPPAAAEATL).

The protein belongs to the herpesviridae CVC2 protein family. Heterodimerizes with CVC1. Interacts with major capsid protein/MCP and triplex capsid protein 1/TRX1 at the pentamer vertices. Interacts with the large tegument protein/LTP.

The protein resides in the virion. It is found in the host nucleus. Functionally, capsid vertex-specific component that plays a role during viral DNA encapsidation, assuring correct genome cleavage and presumably stabilizing capsids that contain full-length viral genomes. Participates in the interaction between the capsid and the tegument through interaction with the large tegument protein/LTP. The polypeptide is Capsid vertex component 2 (Psittacid herpesvirus 1 (isolate Amazon parrot/-/97-0001/1997) (PsHV-1)).